The sequence spans 888 residues: Leukocyte tyrosine kinase receptor (888 aa).

An N-terminal signal peptide occupies residues 1-16; it reads MGCSHRLLLWLGAAGT. At 17–421 the chain is on the extracellular side; it reads ILCSNSEFQT…CMDLPTTASP (405 aa). 2 cysteine pairs are disulfide-bonded: C73-C86 and C168-C179. Residues 226–294 are disordered; it reads LVAAGGGGRS…RSPREGAEGG (69 aa). A compositionally biased stretch (gly residues) spans 260–273; the sequence is GSGGRGGAAGGGSG. C297 and C319 form a disulfide bridge. N-linked (GlcNAc...) asparagine glycans are attached at residues N377 and N409. A helical transmembrane segment spans residues 422 to 446; the sequence is LILMGAVVAALALSLLMMCAVLILV. Residues 447–888 are Cytoplasmic-facing; that stretch reads NQKCQGLWGT…SSSSSIPGIQ (442 aa). The 277-residue stretch at 506–782 folds into the Protein kinase domain; that stretch reads VTLLRALGHG…IQYCTQDPDV (277 aa). ATP-binding positions include 512 to 520 and K540; that span reads LGHGAFGEV. The active-site Proton acceptor is the D639. Y672 is subject to Phosphotyrosine; by autocatalysis. The disordered stretch occupies residues 857 to 888; sequence TYGSWTPRGPQGEDTGIEHCNGSSSSSIPGIQ. A compositionally biased stretch (polar residues) spans 877-888; that stretch reads NGSSSSSIPGIQ.

The protein belongs to the protein kinase superfamily. Tyr protein kinase family. Insulin receptor subfamily. In terms of assembly, homodimer; homodimerizes following ligand-binding. Part of a complex including LTK, TNK2 and GRB2, in which GRB2 promotes LTK recruitment by TNK2. Phosphorylated at tyrosine residues by autocatalysis, which activates kinase activity. In terms of tissue distribution, subsets of lymphoid and neuronal cells.

It localises to the cell membrane. The protein resides in the endoplasmic reticulum. The catalysed reaction is L-tyrosyl-[protein] + ATP = O-phospho-L-tyrosyl-[protein] + ADP + H(+). With respect to regulation, activated by ligand-binding, leading to homodimerization and autophosphorylation. Receptor with a tyrosine-protein kinase activity. Following activation by ALKAL1 or ALKAL2 ligands at the cell surface, transduces an extracellular signal into an intracellular response. Ligand-binding to the extracellular domain induces tyrosine kinase activation, leading to activation of the mitogen-activated protein kinase (MAPK) pathway. Phosphorylates almost exclusively at the first tyrosine of the Y-x-x-x-Y-Y motif. The exact function of this protein is not known; studies with chimeric proteins demonstrate its ability to promote growth and specifically neurite outgrowth, and cell survival. Involved in regulation of the secretory pathway involving endoplasmic reticulum (ER) export sites (ERESs) and ER to Golgi transport. This is Leukocyte tyrosine kinase receptor from Mus musculus (Mouse).